The primary structure comprises 329 residues: Cathepsin K (329 aa).

Positions 1 to 15 (MWGLKVLLLPVMSFA) are cleaved as a signal peptide. Residues 16 to 114 (LYPEEILDTH…TLYIPDWEGR (99 aa)) constitute a propeptide, activation peptide. Asn103 is a glycosylation site (N-linked (GlcNAc...) asparagine). 3 disulfides stabilise this stretch: Cys136–Cys177, Cys170–Cys210, and Cys269–Cys318. Cys139 is a catalytic residue. Catalysis depends on residues His276 and Asn296.

It belongs to the peptidase C1 family.

It is found in the lysosome. Its subcellular location is the secreted. It localises to the apical cell membrane. It carries out the reaction Broad proteolytic activity. With small-molecule substrates and inhibitors, the major determinant of specificity is P2, which is preferably Leu, Met &gt; Phe, and not Arg.. Thiol protease involved in osteoclastic bone resorption and may participate partially in the disorder of bone remodeling. Displays potent endoprotease activity against fibrinogen at acid pH. May play an important role in extracellular matrix degradation. Involved in the release of thyroid hormone thyroxine (T4) by limited proteolysis of TG/thyroglobulin in the thyroid follicle lumen. The polypeptide is Cathepsin K (CTSK) (Macaca fascicularis (Crab-eating macaque)).